Here is a 132-residue protein sequence, read N- to C-terminus: Small ribosomal subunit protein uS8 (132 aa).

It belongs to the universal ribosomal protein uS8 family. In terms of assembly, part of the 30S ribosomal subunit. Contacts proteins S5 and S12.

One of the primary rRNA binding proteins, it binds directly to 16S rRNA central domain where it helps coordinate assembly of the platform of the 30S subunit. This Borreliella burgdorferi (strain ZS7) (Borrelia burgdorferi) protein is Small ribosomal subunit protein uS8.